The chain runs to 465 residues: Lysosomal dipeptide transporter MFSD1 (465 aa).

A disordered region spans residues 1–23 (MEEEDEEARALLAGGPDEADRGA). The Dileucine internalization motif motif lies at 11-12 (LL). 12 consecutive transmembrane segments (helical) span residues 39–59 (LAHR…SYFC), 83–103 (LLYA…GFLI), 113–133 (TIIF…GGIF), 135–155 (AFWL…SLAV), 170–191 (LNLV…NMNL), 213–233 (ITLM…LALA), 266–286 (LWLI…FIGL), 303–323 (SAIN…FGLL), 331–351 (IIWV…LAFT), 361–381 (LLGL…AFVV), 392–412 (FMQS…GMIL), and 418–438 (LFLE…VVLL).

Belongs to the major facilitator superfamily. As to quaternary structure, homodimer. Interacts with lysosomal protein GLMP (via lumenal domain); the interaction starts while both proteins are still in the endoplasmic reticulum and is required for stabilization of MFSD1 in lysosomes but has no direct effect on its targeting to lysosomes or transporter activity.

It is found in the lysosome membrane. The catalysed reaction is L-alpha-aminoacyl-L-arginine(out) = L-alpha-aminoacyl-L-arginine(in). It carries out the reaction L-arginyl-L-alpha-amino acid(out) = L-arginyl-L-alpha-amino acid(in). It catalyses the reaction L-arginyl-glycine(out) = L-arginyl-glycine(in). The enzyme catalyses L-alpha-aminoacyl-L-lysine(out) = L-alpha-aminoacyl-L-lysine(in). The catalysed reaction is L-aspartyl-L-lysine(out) = L-aspartyl-L-lysine(in). It carries out the reaction L-alanyl-L-lysine(out) = L-alanyl-L-lysine(in). It catalyses the reaction L-lysyl-L-alpha-amino acid(out) = L-lysyl-L-alpha-amino acid(in). The enzyme catalyses L-lysyl-L-alanine(out) = L-lysyl-L-alanine(in). The catalysed reaction is L-lysyl-L-lysine(out) = L-lysyl-L-lysine(in). It carries out the reaction L-lysyl-glycine(out) = L-lysyl-glycine(in). It catalyses the reaction L-alpha-aminoacyl-L-histidine(out) = L-alpha-aminoacyl-L-histidine(in). The enzyme catalyses L-histidyl-L-alpha-amino acid(out) = L-histidyl-L-alpha-amino acid(in). The catalysed reaction is L-histidyl-glycine(out) = L-histidyl-glycine(in). In terms of biological role, lysosomal dipeptide uniporter that selectively exports lysine, arginine or histidine-containing dipeptides with a net positive charge from the lysosome lumen into the cytosol. Could play a role in a specific type of protein O-glycosylation indirectly regulating macrophages migration and tissue invasion. Also essential for liver homeostasis. The chain is Lysosomal dipeptide transporter MFSD1 from Homo sapiens (Human).